Consider the following 608-residue polypeptide: N(6)-adenosine-methyltransferase MT-A70-like protein (608 aa).

The segment covering 250–265 (KKKQERRDEKELRPDV) has biased composition (basic and acidic residues). The segment at 250–272 (KKKQERRDEKELRPDVDAGENVT) is disordered. S-adenosyl-L-methionine-binding positions include 395–396 (DL) and D413. Residues 414-428 (PPWDIHMELPYGTMS) form a gate loop 1 region. Residues 480–497 (QLQRIIRTGRTGHWLNHG) form an interphase loop region. Residues 483-496 (RIIRTGRTGHWLNH) are positively charged region required for RNA-binding. Residues 525–533 (VRATSHKPD) are gate loop 2. Residues K531, 554 to 557 (RPHN), and 567 to 568 (NQ) each bind S-adenosyl-L-methionine.

This sequence belongs to the MT-A70-like family. In terms of assembly, component of the WMM complex, a N6-methyltransferase complex composed of a catalytic subcomplex, named MAC, and of an associated subcomplex, named MACOM. The MAC subcomplex is composed of Ime4/Mettl3 and Mettl14. The MACOM subcomplex is composed of fl(2)d, Flacc/Xio, Hakai, vir, and, in some cases of nito. Expressed in testes. In the ovaries, detected in germaria, prefollicle, follicle and polar cells (at protein levels). Detected in the ooplasm and in the cells of the 16-cell cyst of early stages (at protein levels).

Its subcellular location is the nucleus. It carries out the reaction an adenosine in mRNA + S-adenosyl-L-methionine = an N(6)-methyladenosine in mRNA + S-adenosyl-L-homocysteine + H(+). In terms of biological role, catalytic component of the WMM complex, a complex that mediates N6-methyladenosine (m6A) methylation of mRNAs, a modification that plays a role in the efficiency of mRNA splicing and is required for sex determination. In the heterodimer formed with Mettl14, constitutes the catalytic core. Required for sex determination and dosage compensation via Sxl alternative splicing: m6A methylation acts as a key regulator of Sxl pre-mRNA and promotes female-specific alternative splicing of Sxl, which determines female physiognomy. M6A methylation is also required for neuronal functions. During oogenesis, required for egg chamber development probably as part of the N/Notch signaling. The chain is N(6)-adenosine-methyltransferase MT-A70-like protein from Drosophila melanogaster (Fruit fly).